Reading from the N-terminus, the 687-residue chain is Putative mitochondrial carnitine O-acetyltransferase (687 aa).

Catalysis depends on histidine 346, which acts as the Proton acceptor. 446–459 (GASHIKTVFKCSPD) provides a ligand contact to CoA. (R)-carnitine contacts are provided by tyrosine 481 and threonine 494. A Phosphoserine modification is found at serine 517.

This sequence belongs to the carnitine/choline acetyltransferase family.

The protein resides in the mitochondrion inner membrane. The catalysed reaction is (R)-carnitine + acetyl-CoA = O-acetyl-(R)-carnitine + CoA. Its function is as follows. Involved in the transfer of acetyl-CoA into mitochondria. May also be involved in the metabolism of acetate and of ethanol. The protein is Putative mitochondrial carnitine O-acetyltransferase (YAT1) of Saccharomyces cerevisiae (strain ATCC 204508 / S288c) (Baker's yeast).